The sequence spans 421 residues: CinA-like protein (421 aa).

The protein belongs to the CinA family.

The chain is CinA-like protein from Synechococcus elongatus (strain ATCC 33912 / PCC 7942 / FACHB-805) (Anacystis nidulans R2).